The following is a 465-amino-acid chain: Argininosuccinate lyase (465 aa).

This sequence belongs to the lyase 1 family. Argininosuccinate lyase subfamily.

It localises to the cytoplasm. The enzyme catalyses 2-(N(omega)-L-arginino)succinate = fumarate + L-arginine. It participates in amino-acid biosynthesis; L-arginine biosynthesis; L-arginine from L-ornithine and carbamoyl phosphate: step 3/3. This is Argininosuccinate lyase from Variovorax paradoxus (strain S110).